We begin with the raw amino-acid sequence, 329 residues long: Malate dehydrogenase (329 aa).

An NAD(+)-binding site is contributed by 12–18; sequence GAAGQIG. Residues arginine 95 and arginine 101 each contribute to the substrate site. Residues asparagine 108, glutamine 115, and 132-134 each bind NAD(+); that span reads VGN. Substrate contacts are provided by asparagine 134 and arginine 165. Catalysis depends on histidine 190, which acts as the Proton acceptor.

It belongs to the LDH/MDH superfamily. MDH type 2 family.

The enzyme catalyses (S)-malate + NAD(+) = oxaloacetate + NADH + H(+). Functionally, catalyzes the reversible oxidation of malate to oxaloacetate. This is Malate dehydrogenase from Janthinobacterium sp. (strain Marseille) (Minibacterium massiliensis).